The primary structure comprises 360 residues: tRNA (guanine-N(7)-)-methyltransferase (360 aa).

The interval 1–32 (MTPPPPKRQKRDEYRKATAEAASQPGPSDVAE) is disordered. S-adenosyl-L-methionine is bound by residues Gly99 and 122–123 (EI). Positions 177–196 (ADAASPVLSTDTEHTPTTLV) are disordered. Residues 183 to 196 (VLSTDTEHTPTTLV) show a composition bias toward polar residues. S-adenosyl-L-methionine-binding positions include 209-210 (NT) and Cys229. Residue Asp232 is part of the active site. 332–334 (TEE) lines the S-adenosyl-L-methionine pocket.

This sequence belongs to the class I-like SAM-binding methyltransferase superfamily. TrmB family. Forms a complex with trm82.

It localises to the nucleus. The enzyme catalyses guanosine(46) in tRNA + S-adenosyl-L-methionine = N(7)-methylguanosine(46) in tRNA + S-adenosyl-L-homocysteine. Its pathway is tRNA modification; N(7)-methylguanine-tRNA biosynthesis. In terms of biological role, catalyzes the formation of N(7)-methylguanine at position 46 (m7G46) in tRNA. This Neosartorya fischeri (strain ATCC 1020 / DSM 3700 / CBS 544.65 / FGSC A1164 / JCM 1740 / NRRL 181 / WB 181) (Aspergillus fischerianus) protein is tRNA (guanine-N(7)-)-methyltransferase (trm8).